Reading from the N-terminus, the 647-residue chain is Carotenoid phi-ring synthase (647 aa).

Residues Ala-67, 86–87, Lys-94, and Tyr-120 contribute to the FAD site; that span reads EA. One can recognise a Rieske domain in the interval 322–416; that stretch reads VASIPKREVP…VREAGEMLVI (95 aa). Residues Cys-362, His-364, Cys-380, and His-383 each coordinate [2Fe-2S] cluster. 2 residues coordinate FAD: Asp-601 and Met-612.

Belongs to the carotenoid/retinoid oxidoreductase family. The cofactor is FAD. Requires [2Fe-2S] cluster as cofactor.

It carries out the reaction a carotenoid beta-end derivative + 2 A = a carotenoid phi-end derivative + 2 AH2. Its pathway is carotenoid biosynthesis. Involved in the biosynthesis of chlorobactene, a carotenoid with aromatic end group. Catalyzes the introduction of two additional double bonds into the ionone ring of gamma-carotene to produce chlorobactene. The reaction includes an intramolecular methyl transfer from position C1 to position C2 of the ring. The polypeptide is Carotenoid phi-ring synthase (Chlorobaculum tepidum (strain ATCC 49652 / DSM 12025 / NBRC 103806 / TLS) (Chlorobium tepidum)).